The chain runs to 435 residues: Cell adhesion molecule 2 (435 aa).

The N-terminal stretch at 1–24 (MIWKRSAVLRFYSVCGLLLLGSQG) is a signal peptide. The Extracellular segment spans residues 25-367 (QFPLTQNVTV…SLAGQNGPDH (343 aa)). The region spanning 27-119 (PLTQNVTVVE…PVKTSKAYLT (93 aa)) is the Ig-like V-type domain. Residues N31 and N51 are each glycosylated (N-linked (GlcNAc...) asparagine). 3 cysteine pairs are disulfide-bonded: C44–C104, C146–C203, and C248–C296. Ig-like C2-type domains lie at 127 to 219 (PQIS…VAMQ) and 227 to 312 (PSVK…YVLI). A glycan (N-linked (GlcNAc...) asparagine) is linked at N291. Residues 341–351 (TTSPSTSASSS) are compositionally biased toward low complexity. A disordered region spans residues 341–360 (TTSPSTSASSSSRRDPNSLA). A helical membrane pass occupies residues 368–388 (ALIGGIVAVVVFVTLCSIFLL). At 389–435 (GRYLARHKGTYLTNEAKGAEDAPDADTAIINAEGSQVNAEEKKEYFI) the chain is on the cytoplasmic side. At S423 the chain carries Phosphoserine.

The protein belongs to the nectin family. Glycosylation at Asn-51 reduces adhesive binding.

The protein resides in the cell membrane. It localises to the synapse. It is found in the cell projection. Its subcellular location is the axon. In terms of biological role, adhesion molecule that engages in homo- and heterophilic interactions with the other nectin-like family members, leading to cell aggregation. Important for synapse organization, providing regulated trans-synaptic adhesion. Preferentially binds to oligodendrocytes. This Rattus norvegicus (Rat) protein is Cell adhesion molecule 2 (Cadm2).